A 127-amino-acid chain; its full sequence is Glycine cleavage system H protein (127 aa).

In terms of domain architecture, Lipoyl-binding spans 24–105 (TALAGITDFA…YGEGWLVKIK (82 aa)). Position 65 is an N6-lipoyllysine (K65).

Belongs to the GcvH family. The glycine cleavage system is composed of four proteins: P, T, L and H. It depends on (R)-lipoate as a cofactor.

Its function is as follows. The glycine cleavage system catalyzes the degradation of glycine. The H protein shuttles the methylamine group of glycine from the P protein to the T protein. The protein is Glycine cleavage system H protein of Chlorobium phaeobacteroides (strain DSM 266 / SMG 266 / 2430).